A 132-amino-acid polypeptide reads, in one-letter code: MNITDPIADMLTRIRNANDTNKDVVNIPASNMKISIARILKEEGYIKDYKVIEKKPQNALRIYLKYSKNGEKVISGLKRISKPGLRVYVKKDEVPKVLGGLGIAVLSTSRGILTDKQARQEGIGGEVLCYVW.

This sequence belongs to the universal ribosomal protein uS8 family. Part of the 30S ribosomal subunit. Contacts proteins S5 and S12.

Functionally, one of the primary rRNA binding proteins, it binds directly to 16S rRNA central domain where it helps coordinate assembly of the platform of the 30S subunit. The sequence is that of Small ribosomal subunit protein uS8 from Halothermothrix orenii (strain H 168 / OCM 544 / DSM 9562).